The sequence spans 247 residues: Disease resistance protein BAK6 (247 aa).

A signal peptide spans 1–24 (MAAVQFAAAGVLTGLLALATLASC). Residues asparagine 66, asparagine 104, and asparagine 113 are each glycosylated (N-linked (GlcNAc...) asparagine). LRR repeat units follow at residues 90–114 (LESL…LGNL), 116–138 (DLIS…LGSI), 139–161 (STLR…SFGN), 162–186 (LTSL…LGNI), 188–210 (SLQF…VLSL), and 213–237 (VGNL…GLRV). N-linked (GlcNAc...) asparagine glycosylation is found at asparagine 150 and asparagine 161. A glycan (N-linked (GlcNAc...) asparagine) is linked at asparagine 215.

In terms of assembly, interacts with WAK17 isoform 1; the interaction is direct. (Microbial infection) Interacts with G.zeae CFEM1; the interaction is direct. Interacts with G.zeae CFEMN1; the interaction is direct. Interacts with G.zeae CFEM5; the interaction is direct.

Functionally, contributes to activation of the hypersensitive response, a form of programmed cell death, upon fungal infection. May sense the presence of fungal material and relay the signal to WAK17 isoform 1. The polypeptide is Disease resistance protein BAK6 (Zea mays (Maize)).